Consider the following 439-residue polypeptide: Xylose isomerase (439 aa).

Catalysis depends on residues His-98 and Asp-101. Mg(2+) contacts are provided by Glu-229, Glu-265, His-268, Asp-293, Asp-304, Asp-306, and Asp-335.

It belongs to the xylose isomerase family. As to quaternary structure, homotetramer. It depends on Mg(2+) as a cofactor.

It localises to the cytoplasm. The enzyme catalyses alpha-D-xylose = alpha-D-xylulofuranose. Functionally, involved in D-xylose catabolism. The sequence is that of Xylose isomerase (xylA) from Staphylococcus xylosus.